A 588-amino-acid chain; its full sequence is Vesicular glutamate transporter 3 (588 aa).

Residues 1 to 76 (MPFNAFDTFK…CSCCGIPKRY (76 aa)) are Cytoplasmic-facing. The chain crosses the membrane as a helical span at residues 77–97 (IIAVMSGLGFCISFGIRCNLG). Residues 98–130 (VAIVEMVNNSTVYVDGKPEIQTAQFNWDPETVG) lie on the Vesicular side of the membrane. A glycan (N-linked (GlcNAc...) asparagine) is linked at asparagine 106. The helical transmembrane segment at 131 to 151 (LIHGSFFWGYIVTQIPGGFIS) threads the bilayer. Topologically, residues 152–153 (NK) are cytoplasmic. A helical membrane pass occupies residues 154-174 (FAANRVFGAAIFLTSTLNMFI). The Vesicular segment spans residues 175–182 (PSAARVHY). A helical transmembrane segment spans residues 183–203 (GCVMCVRILQGLVEGVTYPAC). Residues 204–221 (HGMWSKWAPPLERSRLAT) lie on the Cytoplasmic side of the membrane. Residues 222–242 (TSFCGSYAGAVVAMPLAGVLV) traverse the membrane as a helical segment. The Vesicular portion of the chain corresponds to 243–249 (QYIGWAS). Residues 250 to 270 (VFYIYGMFGIIWYMFWLLQAY) traverse the membrane as a helical segment. At 271 to 314 (ECPAVHPTISNEERTYIETSIGEGANLASLSKFNTPWRRFFTSL) the chain is on the cytoplasmic side. The helical transmembrane segment at 315-335 (PVYAIIVANFCRSWTFYLLLI) threads the bilayer. The Vesicular segment spans residues 336–353 (SQPAYFEEVFGFAISKVG). Residues 354–374 (LLSAVPHMVMTIVVPIGGQLA) traverse the membrane as a helical segment. The Cytoplasmic segment spans residues 375–390 (DYLRSRKILTTTAVRK). A helical transmembrane segment spans residues 391 to 411 (IMNCGGFGMEATLLLVVGFSH). The Vesicular portion of the chain corresponds to 412–413 (TK). A helical transmembrane segment spans residues 414–434 (GVAISFLVLAVGFSGFAISGF). Residues 435–447 (NVNHLDIAPRYAS) are Cytoplasmic-facing. The chain crosses the membrane as a helical span at residues 448–468 (ILMGISNGVGTLSGMVCPLIV). The Vesicular segment spans residues 469-481 (GAMTKHKTREEWQ). The helical transmembrane segment at 482-502 (NVFLIAALVHYSGVIFYGVFA) threads the bilayer. Residues 503-585 (SGEKQDWADP…LSYQNEEDFS (83 aa)) lie on the Cytoplasmic side of the membrane. Residues 539-588 (FVSPRKKMSYGATTQNCEVQKTDRRQQRESAFEGEEPLSYQNEEDFSETS) form a disordered region. The segment covering 558 to 569 (QKTDRRQQRESA) has biased composition (basic and acidic residues). Residues 570 to 588 (FEGEEPLSYQNEEDFSETS) are compositionally biased toward acidic residues.

It belongs to the major facilitator superfamily. Sodium/anion cotransporter family. VGLUT subfamily. In terms of tissue distribution, expressed in brain, kidney and liver. Expressed within the amygdala, brainstem, cerberal cortex, dorsal root ganglia, dorsal spinal cord, hippocampus, hypothalamus, retina, striatum and ventral spinal cord. Expressed within neurons of the caudate-putamen, olfactory tubercle, nucleus accumbens, hippocampus, interpeduncular nucleus and dorsal and medial raphe nuclei. Expressed in inner hair cells of the ear. Expressed at synaptic terminals within the lateral superior olive (LSO), a nucleus of the mammalian sound localization system, and in the medial nucleus of the trapezoid body (MNTB), which provides inhibitory input to the LSO.

Its subcellular location is the cytoplasmic vesicle. The protein resides in the secretory vesicle. It localises to the synaptic vesicle membrane. It is found in the cell membrane. The protein localises to the synapse. Its subcellular location is the synaptosome. The catalysed reaction is L-glutamate(out) = L-glutamate(in). The enzyme catalyses chloride(in) = chloride(out). It carries out the reaction 3 Na(+)(out) + phosphate(out) = 3 Na(+)(in) + phosphate(in). The L-glutamate uniporter activity exhibits a biphasic dependence on chloride concentration. Chloride channel activity is allosterically activated by lumenal H(+) and Cl(-) leading to synaptic vesicles acidification. The glutamate transport activity is allosterically activated by lumenal H(+) and Cl(-), preventing non-vesicular L-glutamate release. Multifunctional transporter that transports L-glutamate as well as multiple ions such as chloride, sodium and phosphate. At the synaptic vesicle membrane, mainly functions as an uniporter that mediates the uptake of L-glutamate into synaptic vesicles at presynaptic nerve terminals of excitatory neural cells. The L-glutamate uniporter activity is electrogenic and is driven by the proton electrochemical gradient, mainly by the electrical gradient established by the vacuolar H(+)-ATPase across the synaptic vesicle membrane. In addition, functions as a chloride channel that allows a chloride permeation through the synaptic vesicle membrane that affects the proton electrochemical gradient and promotes synaptic vesicles acidification. At the plasma membrane, following exocytosis, functions as a symporter of Na(+) and phosphate from the extracellular space to the cytoplasm allowing synaptic phosphate homeostasis regulation. The symporter activity is electrogenic. Moreover, operates synergistically with SLC18A3/VACHT under a constant H(+) gradient, thereby allowing striatal vesicular acetylcholine uptake. The protein is Vesicular glutamate transporter 3 of Rattus norvegicus (Rat).